We begin with the raw amino-acid sequence, 569 residues long: MKVLLRLICFIALLISSLEADKCKEREEKIILVSSANEIDVRPCPLNPNEHKGTITWYKDDSKTPVSTEQASRIHQHKEKLWFVPAKVEDSGHYYCVVRNSSYCLRIKISAKFVENEPNLCYNAQAIFKQKLPVAGDGGLVCPYMEFFKNENNELPKLQWYKDCKPLLLDNIHFSGVKDRLIVMNVAEKHRGNYTCHASYTYLGKQYPITRVIEFITLEENKPTRPVIVSPANETMEVDLGSQIQLICNVTGQLSDIAYWKWNGSVIDEDDPVLGEDYYSVENPANKRRSTLITVLNISEIESRFYKHPFTCFAKNTHGIDAAYIQLIYPVTNFQKHMIGICVTLTVIIVCSVFIYKIFKIDIVLWYRDSCYDFLPIKASDGKTYDAYILYPKTVGEGSTSDCDIFVFKVLPEVLEKQCGYKLFIYGRDDYVGEDIVEVINENVKKSRRLIIILVRETSGFSWLGGSSEEQIAMYNALVQDGIKVVLLELEKIQDYEKMPESIKFIKQKHGAIRWSGDFTQGPQSAKTRFWKNVRYHMPVQRRSPSSKHQLLSPATKEKLQREAHVPLG.

The signal sequence occupies residues 1–17 (MKVLLRLICFIALLISS). Residues 18–336 (LEADKCKERE…LIYPVTNFQK (319 aa)) lie on the Extracellular side of the membrane. Disulfide bonds link Cys23-Cys104, Cys44-Cys96, Cys121-Cys164, and Cys142-Cys196. Ig-like C2-type domains follow at residues 23–110 (CKER…IKIS), 118–210 (PNLC…YPIT), and 226–328 (PVIV…IQLI). N-linked (GlcNAc...) asparagine glycosylation is present at Asn100. Asn193, Asn233, Asn249, Asn263, and Asn297 each carry an N-linked (GlcNAc...) asparagine glycan. Cysteines 248 and 312 form a disulfide. The chain crosses the membrane as a helical span at residues 337 to 356 (HMIGICVTLTVIIVCSVFIY). Topologically, residues 357 to 569 (KIFKIDIVLW…LQREAHVPLG (213 aa)) are cytoplasmic. The TIR domain occupies 383–538 (KTYDAYILYP…RFWKNVRYHM (156 aa)). Glu470 is a catalytic residue. A Phosphotyrosine modification is found at Tyr496. A disordered region spans residues 540-569 (VQRRSPSSKHQLLSPATKEKLQREAHVPLG). Residues 556–569 (TKEKLQREAHVPLG) show a composition bias toward basic and acidic residues.

This sequence belongs to the interleukin-1 receptor family. The interleukin-1 receptor complex is a heterodimer of IL1R1 and IL1RAP. Interacts with PIK3R1. Interacts with IL1A. In terms of processing, a soluble form (sIL1R1) is probably produced by proteolytic cleavage at the cell surface (shedding). Post-translationally, rapidly phosphorylated on Tyr-496 in response to IL-1, which creates a SH2 binding site for the PI 3-kinase regulatory subunit PIK3R1. As to expression, expressed in T-helper cell subsets. Preferentially expressed in T-helper 1 (Th1) cells.

The protein localises to the membrane. Its subcellular location is the cell membrane. It is found in the secreted. It carries out the reaction NAD(+) + H2O = ADP-D-ribose + nicotinamide + H(+). Receptor for IL1A, IL1B and IL1RN. After binding to interleukin-1 associates with the coreceptor IL1RAP to form the high affinity interleukin-1 receptor complex which mediates interleukin-1-dependent activation of NF-kappa-B, MAPK and other pathways. Signaling involves the recruitment of adapter molecules such as TOLLIP, MYD88, and IRAK1 or IRAK2 via the respective TIR domains of the receptor/coreceptor subunits. Binds ligands with comparable affinity and binding of antagonist IL1RN prevents association with IL1RAP to form a signaling complex. Involved in IL1B-mediated costimulation of IFNG production from T-helper 1 (Th1) cells. The polypeptide is Interleukin-1 receptor type 1 (IL1R1) (Homo sapiens (Human)).